The primary structure comprises 423 residues: Histidine--tRNA ligase (423 aa).

This sequence belongs to the class-II aminoacyl-tRNA synthetase family. As to quaternary structure, homodimer.

It is found in the cytoplasm. It catalyses the reaction tRNA(His) + L-histidine + ATP = L-histidyl-tRNA(His) + AMP + diphosphate + H(+). The protein is Histidine--tRNA ligase of Orientia tsutsugamushi (strain Ikeda) (Rickettsia tsutsugamushi).